The following is a 154-amino-acid chain: Ribosome maturation factor RimP (154 aa).

This sequence belongs to the RimP family.

It localises to the cytoplasm. Functionally, required for maturation of 30S ribosomal subunits. This chain is Ribosome maturation factor RimP, found in Clostridium kluyveri (strain ATCC 8527 / DSM 555 / NBRC 12016 / NCIMB 10680 / K1).